Reading from the N-terminus, the 214-residue chain is A-type ATP synthase subunit D (214 aa).

It belongs to the V-ATPase D subunit family. As to quaternary structure, has multiple subunits with at least A(3), B(3), C, D, E, F, H, I and proteolipid K(x).

It is found in the cell membrane. Functionally, component of the A-type ATP synthase that produces ATP from ADP in the presence of a proton gradient across the membrane. The chain is A-type ATP synthase subunit D from Desulfurococcus sp. (strain SY).